Consider the following 1098-residue polypeptide: Tudor domain-containing protein 7 (1098 aa).

HTH OST-type domains follow at residues Glu-3–Ala-76 and Lys-233–Lys-302. Ser-319 is modified (phosphoserine). An HTH OST-type 3 domain is found at Met-337 to Leu-406. 2 Tudor domains span residues Thr-513–Leu-570 and Leu-703–Glu-760. At Ser-859 the chain carries Phosphoserine. Residues Asn-861 to Asn-1098 are interaction with CDK17. The segment at Pro-893–Asn-1098 is interaction with CABLES1.

This sequence belongs to the TDRD7 family. Found in a mRNP complex, at least composed of TDRD1, TDRD6, TDRD7 and DDX4. Found in a complex containing CABLES1, CDK16 and CDK17. Interacts with CABLES1, CDK17 and PIWIL1.

The protein localises to the cytoplasm. In terms of biological role, component of specific cytoplasmic RNA granules involved in post-transcriptional regulation of specific genes: probably acts by binding to specific mRNAs and regulating their translation. Required for lens transparency during lens development, by regulating translation of genes such as CRYBB3 and HSPB1 in the developing lens. Also required during spermatogenesis. The polypeptide is Tudor domain-containing protein 7 (TDRD7) (Bos taurus (Bovine)).